A 554-amino-acid chain; its full sequence is Valerianol synthase TPS1G (554 aa).

Asp-307 and Asp-311 together coordinate Mg(2+). The DDXXD motif signature appears at 326–330; that stretch reads VQRWD. Mg(2+)-binding residues include Asp-452, Ser-456, and Glu-460.

This sequence belongs to the terpene synthase family. Requires Mg(2+) as cofactor.

It catalyses the reaction (2E,6E)-farnesyl diphosphate + H2O = valerianol + diphosphate. The protein operates within secondary metabolite biosynthesis; terpenoid biosynthesis. Terpene synthase that catalyzes the biosynthesis of the terpene valerianol, which is a volatile compound of floral scent. The chain is Valerianol synthase TPS1G from Camellia hiemalis (Camellia).